A 308-amino-acid chain; its full sequence is Methionine synthase (308 aa).

Zn(2+)-binding residues include His-201, Cys-203, Glu-224, and Cys-285.

This sequence belongs to the archaeal MetE family. It depends on Zn(2+) as a cofactor.

Its pathway is amino-acid biosynthesis; L-methionine biosynthesis via de novo pathway. Its function is as follows. Catalyzes the transfer of a methyl group to L-homocysteine resulting in methionine formation. Can use methylcobalamin and methylcobinamide as methyl donors, but methylcobalamin is not considered to be the physiological substrate. This Methanothermobacter thermautotrophicus (strain ATCC 29096 / DSM 1053 / JCM 10044 / NBRC 100330 / Delta H) (Methanobacterium thermoautotrophicum) protein is Methionine synthase.